A 121-amino-acid chain; its full sequence is Class I hydrophobin 2 (121 aa).

The N-terminal stretch at 1 to 18 is a signal peptide; it reads MQFTTIVMTLAAAVAVTA. Cystine bridges form between Cys52–Cys101, Cys60–Cys94, Cys61–Cys79, and Cys102–Cys116. Asn83 carries N-linked (GlcNAc...) asparagine glycosylation.

The protein belongs to the fungal hydrophobin family. In terms of assembly, self-assembles to form functional amyloid fibrils called rodlets. Self-assembly into fibrillar rodlets occurs spontaneously at hydrophobic:hydrophilic interfaces and the rodlets further associate laterally to form amphipathic monolayers. As to expression, expressed in conidia and aerial hyphae.

It is found in the secreted. The protein resides in the cell wall. Aerial growth, conidiation, and dispersal of filamentous fungi in the environment rely upon a capability of their secreting small amphipathic proteins called hydrophobins (HPBs) with low sequence identity. Class I can self-assemble into an outermost layer of rodlet bundles on aerial cell surfaces, conferring cellular hydrophobicity that supports fungal growth, development and dispersal; whereas Class II form highly ordered films at water-air interfaces through intermolecular interactions but contribute nothing to the rodlet structure. Hcf-2 is a class I hydrophobin that is not necessary for the development of hyphae or conidia but contributes to cell surface hydrophobicity. This is Class I hydrophobin 2 from Passalora fulva (Tomato leaf mold).